A 354-amino-acid chain; its full sequence is UDP-N-acetylglucosamine--N-acetylmuramyl-(pentapeptide) pyrophosphoryl-undecaprenol N-acetylglucosamine transferase (354 aa).

Residues threonine 11–glycine 13, asparagine 117, arginine 160, serine 186, and glutamine 288 each bind UDP-N-acetyl-alpha-D-glucosamine.

Belongs to the glycosyltransferase 28 family. MurG subfamily.

The protein localises to the cell inner membrane. The enzyme catalyses di-trans,octa-cis-undecaprenyl diphospho-N-acetyl-alpha-D-muramoyl-L-alanyl-D-glutamyl-meso-2,6-diaminopimeloyl-D-alanyl-D-alanine + UDP-N-acetyl-alpha-D-glucosamine = di-trans,octa-cis-undecaprenyl diphospho-[N-acetyl-alpha-D-glucosaminyl-(1-&gt;4)]-N-acetyl-alpha-D-muramoyl-L-alanyl-D-glutamyl-meso-2,6-diaminopimeloyl-D-alanyl-D-alanine + UDP + H(+). Its pathway is cell wall biogenesis; peptidoglycan biosynthesis. Functionally, cell wall formation. Catalyzes the transfer of a GlcNAc subunit on undecaprenyl-pyrophosphoryl-MurNAc-pentapeptide (lipid intermediate I) to form undecaprenyl-pyrophosphoryl-MurNAc-(pentapeptide)GlcNAc (lipid intermediate II). The sequence is that of UDP-N-acetylglucosamine--N-acetylmuramyl-(pentapeptide) pyrophosphoryl-undecaprenol N-acetylglucosamine transferase from Rickettsia canadensis (strain McKiel).